Consider the following 265-residue polypeptide: Uroporphyrinogen-III synthase (265 aa).

It belongs to the uroporphyrinogen-III synthase family. As to quaternary structure, monomer.

Its subcellular location is the cytoplasm. It is found in the cytosol. It carries out the reaction hydroxymethylbilane = uroporphyrinogen III + H2O. It participates in porphyrin-containing compound metabolism; protoporphyrin-IX biosynthesis; coproporphyrinogen-III from 5-aminolevulinate: step 3/4. Functionally, catalyzes cyclization of the linear tetrapyrrole, hydroxymethylbilane, to the macrocyclic uroporphyrinogen III, the branch point for the various sub-pathways leading to the wide diversity of porphyrins. Porphyrins act as cofactors for a multitude of enzymes that perform a variety of processes within the cell such as methionine synthesis (vitamin B12) or oxygen transport (heme). This is Uroporphyrinogen-III synthase (Uros) from Mus musculus (Mouse).